Here is a 253-residue protein sequence, read N- to C-terminus: Toxin PezT (253 aa).

39-46 is an ATP binding site; it reads GQSGAGKT. The active-site Proton acceptor is the Asp66.

It belongs to the zeta toxin family. As to quaternary structure, forms a PezA(2)PezT(2) heterotetramer. The heterotetramer is much more stable than either of the proteins alone, and a specific mechanism may be necessary to liberate the toxin.

It catalyses the reaction UDP-N-acetyl-alpha-D-glucosamine + ATP = UDP-N-acetyl-alpha-D-glucosamine 3'-phosphate + ADP + H(+). Toxic component of a type II toxin-antitoxin (TA) system. Phosphorylates UDP-N-acetyl-D-glucosamine (UNAG) on the 3'-hydroxyl group of the N-acetyl-D-glucosamine moiety, yielding UNAG-3P. UNAG-3P inhibits MurA, the first committed step in cell wall synthesis, which is then blocked. Upon expression in E.coli results in decreased cell growth and viability, followed 3 hours later by growth restoration; the toxic effect and phosphorylation of UNAG are neutralized by coexpression with cognate antitoxin PezA. A mutant lacking the last 11 residues is stably maintained in E.coli, unlike the wild-type which undergoes spontaneous mutation. Expression of the deletion mutant in rapidly growing liquid cultures leads to cell bulging, permeabilization and massive lysis by 1 hour. Cells that survive are not able to undergo cytokinesis. Expression in slowly growing cells leads to bulging but not lysis. Functionally, acts as a corepressor of its own operon with PezA; it is not clear if it binds DNA alone. This is Toxin PezT (pezT) from Streptococcus pneumoniae serotype 4 (strain ATCC BAA-334 / TIGR4).